A 2839-amino-acid polypeptide reads, in one-letter code: Bifunctional DNA-directed RNA polymerase subunit beta-beta' (2839 aa).

The tract at residues 1 to 1433 (MVDSSYMCAS…CLNVALKQNN (1433 aa)) is DNA-directed RNA polymerase subunit beta. Residues 1436 to 2839 (IEDISHTNIA…KESVAESRYN (1404 aa)) are DNA-directed RNA polymerase subunit beta'. The Zn(2+) site is built by C1501, C1503, C1516, and C1519. Mg(2+) contacts are provided by D1893, D1895, and D1897. Zn(2+)-binding residues include C2238, C2312, C2319, and C2322.

This sequence in the N-terminal section; belongs to the RNA polymerase beta chain family. The protein in the C-terminal section; belongs to the RNA polymerase beta' chain family. As to quaternary structure, the RNAP catalytic core consists of 2 alpha, 1 beta/beta' and 1 omega subunit. When a sigma factor is associated with the core the holoenzyme is formed, which can initiate transcription. Mg(2+) serves as cofactor. Zn(2+) is required as a cofactor.

It carries out the reaction RNA(n) + a ribonucleoside 5'-triphosphate = RNA(n+1) + diphosphate. Its function is as follows. DNA-dependent RNA polymerase catalyzes the transcription of DNA into RNA using the four ribonucleoside triphosphates as substrates. The chain is Bifunctional DNA-directed RNA polymerase subunit beta-beta' (rpoBC) from Wolbachia sp. subsp. Brugia malayi (strain TRS).